A 131-amino-acid polypeptide reads, in one-letter code: D-ribose pyranase (131 aa).

The active-site Proton donor is the His20. Residues Asp28, His98, and 120–122 each bind substrate; that span reads YSN.

This sequence belongs to the RbsD / FucU family. RbsD subfamily. As to quaternary structure, homodecamer.

It is found in the cytoplasm. The catalysed reaction is beta-D-ribopyranose = beta-D-ribofuranose. The protein operates within carbohydrate metabolism; D-ribose degradation; D-ribose 5-phosphate from beta-D-ribopyranose: step 1/2. In terms of biological role, catalyzes the interconversion of beta-pyran and beta-furan forms of D-ribose. This Pediococcus pentosaceus (strain ATCC 25745 / CCUG 21536 / LMG 10740 / 183-1w) protein is D-ribose pyranase.